We begin with the raw amino-acid sequence, 468 residues long: Monocarboxylate transporter 6 (468 aa).

At 1–13 the chain is on the cytoplasmic side; it reads MARALEQADGRWA. Residues 14–34 form a helical membrane-spanning segment; sequence WVVLLSSLVTQALTLGFPTCI. Over 35–53 the chain is Extracellular; it reads GVFFTDLQRDFQASNSETS. A helical membrane pass occupies residues 54 to 74; it reads WFPSILGAMVHGGGPLCSILV. Residues 75 to 80 are Cytoplasmic-facing; that stretch reads KHFGCR. The helical transmembrane segment at 81 to 101 threads the bilayer; that stretch reads VTMMLGGVLASLGMVVSTFSG. A topological domain (extracellular) is located at residue Ser102. Residues 103 to 122 traverse the membrane as a helical segment; the sequence is LTHLFLTAGVITGLGMCFSF. Over 123 to 138 the chain is Cytoplasmic; sequence QSSITVVGLYFVRRRP. The helical transmembrane segment at 139–159 threads the bilayer; the sequence is LANALASMGLSMGVTLWPLLA. The Extracellular portion of the chain corresponds to 160-171; it reads RYLLETLGWRGA. A helical membrane pass occupies residues 172–192; sequence FLIFGGILLHCCVCGALLRPV. Topologically, residues 193–239 are cytoplasmic; it reads ATNEVPEPKEDPLLPPKIPTRSCLATCVSTIRYHLAFDILRHNMGFC. A helical membrane pass occupies residues 240–260; the sequence is IYVTGVTWMNLGFALPHIFLV. The Extracellular portion of the chain corresponds to 261-274; the sequence is PYAMHHGVDDYWAA. Residues 275-295 traverse the membrane as a helical segment; that stretch reads MLMSIVGFCNIFLRPMAGLLL. Topologically, residues 296–306 are cytoplasmic; sequence AGRKSLAAYRK. A helical membrane pass occupies residues 307-327; the sequence is YLFAVAILINGLTNLICTVSA. Over 328–330 the chain is Extracellular; sequence DFR. Residues 331 to 351 form a helical membrane-spanning segment; that stretch reads VLLGYCLVYSLSMCGVGILVF. Over 352-368 the chain is Cytoplasmic; that stretch reads QVLMDIVPMDRFPSALG. A helical transmembrane segment spans residues 369-389; it reads LFTILCGVTSLISPPLAGLLL. Topologically, residues 390–396 are extracellular; it reads DKTNNFS. Residues 397 to 417 form a helical membrane-spanning segment; it reads YVFYMSSGFLVSGSLILGVGF. At 418 to 468 the chain is on the cytoplasmic side; the sequence is YAAEKKKLKQDGQAKMENATSEMTPMHDLTSEDKDSAKKQPYPESIYMTNV. Positions 429–468 are disordered; the sequence is GQAKMENATSEMTPMHDLTSEDKDSAKKQPYPESIYMTNV. Positions 446–455 are enriched in basic and acidic residues; sequence LTSEDKDSAK.

Belongs to the major facilitator superfamily. Monocarboxylate porter (TC 2.A.1.13) family.

The protein resides in the cell membrane. In terms of biological role, proton-linked monocarboxylate transporter. Catalyzes the rapid transport across the plasma membrane of many monocarboxylates such as lactate, pyruvate, branched-chain oxo acids derived from leucine, valine and isoleucine, and the ketone bodies acetoacetate, beta-hydroxybutyrate and acetate. The sequence is that of Monocarboxylate transporter 6 (Slc16a5) from Mus musculus (Mouse).